We begin with the raw amino-acid sequence, 295 residues long: Aspartate carbamoyltransferase catalytic subunit (295 aa).

The carbamoyl phosphate site is built by R49 and T50. An L-aspartate-binding site is contributed by K77. Positions 99, 127, and 130 each coordinate carbamoyl phosphate. 2 residues coordinate L-aspartate: R161 and R212. Carbamoyl phosphate is bound by residues G251 and P252.

Belongs to the aspartate/ornithine carbamoyltransferase superfamily. ATCase family. In terms of assembly, heterododecamer (2C3:3R2) of six catalytic PyrB chains organized as two trimers (C3), and six regulatory PyrI chains organized as three dimers (R2).

The catalysed reaction is carbamoyl phosphate + L-aspartate = N-carbamoyl-L-aspartate + phosphate + H(+). Its pathway is pyrimidine metabolism; UMP biosynthesis via de novo pathway; (S)-dihydroorotate from bicarbonate: step 2/3. Its function is as follows. Catalyzes the condensation of carbamoyl phosphate and aspartate to form carbamoyl aspartate and inorganic phosphate, the committed step in the de novo pyrimidine nucleotide biosynthesis pathway. The chain is Aspartate carbamoyltransferase catalytic subunit from Campylobacter jejuni subsp. jejuni serotype O:2 (strain ATCC 700819 / NCTC 11168).